Reading from the N-terminus, the 534-residue chain is GMP synthase [glutamine-hydrolyzing] (534 aa).

One can recognise a Glutamine amidotransferase type-1 domain in the interval 20–210 (MLIILDFGSQ…VYHICDCEPT (191 aa)). The active-site Nucleophile is the C97. Active-site residues include H184 and E186. The 199-residue stretch at 211–409 (WTTETFVEEA…LGLPEEIVKR (199 aa)) folds into the GMPS ATP-PPase domain. 238–244 (SGGVDSS) contributes to the ATP binding site.

In terms of assembly, homodimer.

The enzyme catalyses XMP + L-glutamine + ATP + H2O = GMP + L-glutamate + AMP + diphosphate + 2 H(+). The protein operates within purine metabolism; GMP biosynthesis; GMP from XMP (L-Gln route): step 1/1. Functionally, catalyzes the synthesis of GMP from XMP. This Synechococcus sp. (strain ATCC 27144 / PCC 6301 / SAUG 1402/1) (Anacystis nidulans) protein is GMP synthase [glutamine-hydrolyzing].